A 631-amino-acid chain; its full sequence is NADPH oxidoreductase A (631 aa).

The Flavodoxin-like domain maps to I73–C212. FMN contacts are provided by residues T79 to L83 and V160 to R191. The 234-residue stretch at K247–P480 folds into the FAD-binding FR-type domain. P249 to S299 serves as a coordination point for FAD. Residue Q504–W630 participates in NADP(+) binding.

FAD serves as cofactor. The cofactor is FMN.

In terms of biological role, probable NADPH oxidoreductase that controls development beyond the mound stage. This Dictyostelium discoideum (Social amoeba) protein is NADPH oxidoreductase A (redA).